A 110-amino-acid polypeptide reads, in one-letter code: Mobility group protein 1B (110 aa).

The HMG box DNA-binding region spans 5-71 (PKRPLSAYML…NYIRALQEYE (67 aa)). Positions 71–81 (ERNGGGGDDKG) are enriched in basic and acidic residues. Positions 71–110 (ERNGGGGDDKGKKRKGAAPKKGAGKKSKKGAHSDDDGDSE) are disordered. The span at 82-100 (KKRKGAAPKKGAGKKSKKG) shows a compositional bias: basic residues.

The protein belongs to the HMGB family.

It localises to the nucleus. The protein resides in the chromosome. Found in condensed chromomeres. Binds preferentially to AT-rich DNA. The polypeptide is Mobility group protein 1B (HMG1B) (Chironomus tentans (Midge)).